The sequence spans 1134 residues: MPISYCVSAKKASVVVESVVGNFTGHENVNLIVARGNRIDVQLVSPEGLKNVCEIPIYGQVLTIALVKCKRDKRHSLIVVTEKWHMAILAYRDGKVVTRAAGCIADPTGRATDNLFSLTIHRNGLIAIRAFEGSVKMIQWESGTDLRHFNVRFDYPNVSDFKFVDTGEDDVYRVAFIYDDDHGKHLQFSDLNMHDKEFRTYSRQASIAADSSVLIPVPHAIGGVIVLGSNSVLYKPNDNLGEVVPYTCSLLENTTFTCHGIVDASGERFLLSDTDGRLLMLLLNVTESQSGYTVKEMRIDYLGETSIADSINYIDNGVVFVGSRLGDSQLIRLMTEPNGGSYSVILETYSNIGPIRDMVMVESDGQPQLVTCTGADKDGSLRVIRNGIGIDELASVDLAGVVGIFPIRLDSNADNYVIVSLSDETHVLQITGEELEDVKLLEINTDLPTIFASTLFGPNDSGIILQATEKQIRLMSSSGLSKFWEPTNGEIISKVSVNAANGQIVLAARDTVYLLTCIVDEMGALDIQLTAEKKFENEIACLDLSNEGDDPNNKATFLVLAFWSTFAMEVIQLPDLITVCHTDLPTKIIPRSIIATCIEEVHYLLVAFGDGALVYYVFDIKTGTHGEPKKSNVGTRPPSLHRVRNKNRQHLFVCSDRPVIIFSASKKLVFSNVNVKLVDTVCSLSSSAYRDCLVISDGNSMVFGTVDDIQKIHVRSIPMGESVLRIAYQKSTSTYGVCSNRTESKAERVFASKNALVTSQSRPKVASTRADMDESPPNTTSSFMVLDQNTFQVLHSHEFGPWETALSCISGQFTNDSSTYYVVGTGLIYPDETETKIGRIVVFEVDDVERSKLRRVHELVVRGSPLAIRILNGKLVAAINSSIRLFEWTTDKELRLECSSFNHVIALDLKVMNEEVAVADVMRSVSLLSYRMLEGNFEEVAKDWNSQWMVTCEFITAESILGGEAHLNLFTVEVDKTRPITDDGRYVLEPTGYWYLGELPKVMTRSTLVIQPEDSIIQYSQPIMFGTNQGTIGMIVQIDDKWKKFLIAIEKAIADSVKNCMHIEHSSYRTFVFQKRAEPPSGFVDGDLVESILDMDRSVAMDILSKVSDKGWDPSLPRDPVEILKVIEDLARMH.

The protein belongs to the DDB1 family. In terms of assembly, interacts with cdt-1 and cul-4. As to expression, expressed at high levels in the spermatheca of adult hermaphrodites.

It localises to the cytoplasm. The protein resides in the nucleus. It functions in the pathway protein modification; protein ubiquitination. Its function is as follows. Plays a role in DNA repair. May be a component of an E3 ubiquitin-protein ligase which promotes histone ubiquitination in response to UV irradiation. Histone ubiquitination may be important for subsequent DNA repair. Promotes the degradation of the replication licensing factor cdt-1 during S-phase, thereby preventing rereplication of DNA during a single round of cell division. In Caenorhabditis elegans, this protein is DNA damage-binding protein 1 (ddb-1).